Reading from the N-terminus, the 293-residue chain is 33 kDa chaperonin (293 aa).

2 disulfides stabilise this stretch: Cys238–Cys240 and Cys271–Cys274.

Belongs to the HSP33 family. In terms of processing, under oxidizing conditions two disulfide bonds are formed involving the reactive cysteines. Under reducing conditions zinc is bound to the reactive cysteines and the protein is inactive.

It is found in the cytoplasm. Functionally, redox regulated molecular chaperone. Protects both thermally unfolding and oxidatively damaged proteins from irreversible aggregation. Plays an important role in the bacterial defense system toward oxidative stress. This Staphylococcus aureus (strain USA300) protein is 33 kDa chaperonin.